The sequence spans 321 residues: 4-hydroxy-3-methylbut-2-enyl diphosphate reductase (321 aa).

Cys13 is a [4Fe-4S] cluster binding site. Positions 41 and 75 each coordinate (2E)-4-hydroxy-3-methylbut-2-enyl diphosphate. Positions 41 and 75 each coordinate dimethylallyl diphosphate. Positions 41 and 75 each coordinate isopentenyl diphosphate. Cys97 is a [4Fe-4S] cluster binding site. His125 provides a ligand contact to (2E)-4-hydroxy-3-methylbut-2-enyl diphosphate. Position 125 (His125) interacts with dimethylallyl diphosphate. His125 serves as a coordination point for isopentenyl diphosphate. Glu127 functions as the Proton donor in the catalytic mechanism. Thr168 contacts (2E)-4-hydroxy-3-methylbut-2-enyl diphosphate. Residue Cys225 coordinates [4Fe-4S] cluster. (2E)-4-hydroxy-3-methylbut-2-enyl diphosphate-binding residues include Ser253, Ser254, Asn255, and Ser302. Dimethylallyl diphosphate-binding residues include Ser253, Ser254, Asn255, and Ser302. 4 residues coordinate isopentenyl diphosphate: Ser253, Ser254, Asn255, and Ser302.

The protein belongs to the IspH family. [4Fe-4S] cluster is required as a cofactor.

It carries out the reaction isopentenyl diphosphate + 2 oxidized [2Fe-2S]-[ferredoxin] + H2O = (2E)-4-hydroxy-3-methylbut-2-enyl diphosphate + 2 reduced [2Fe-2S]-[ferredoxin] + 2 H(+). The enzyme catalyses dimethylallyl diphosphate + 2 oxidized [2Fe-2S]-[ferredoxin] + H2O = (2E)-4-hydroxy-3-methylbut-2-enyl diphosphate + 2 reduced [2Fe-2S]-[ferredoxin] + 2 H(+). It functions in the pathway isoprenoid biosynthesis; dimethylallyl diphosphate biosynthesis; dimethylallyl diphosphate from (2E)-4-hydroxy-3-methylbutenyl diphosphate: step 1/1. Its pathway is isoprenoid biosynthesis; isopentenyl diphosphate biosynthesis via DXP pathway; isopentenyl diphosphate from 1-deoxy-D-xylulose 5-phosphate: step 6/6. In terms of biological role, catalyzes the conversion of 1-hydroxy-2-methyl-2-(E)-butenyl 4-diphosphate (HMBPP) into a mixture of isopentenyl diphosphate (IPP) and dimethylallyl diphosphate (DMAPP). Acts in the terminal step of the DOXP/MEP pathway for isoprenoid precursor biosynthesis. The protein is 4-hydroxy-3-methylbut-2-enyl diphosphate reductase of Pelodictyon phaeoclathratiforme (strain DSM 5477 / BU-1).